A 379-amino-acid polypeptide reads, in one-letter code: Homoserine O-succinyltransferase (379 aa).

Positions Asn51 to Leu360 constitute an AB hydrolase-1 domain. The active-site Nucleophile is Ser157. Arg227 contributes to the substrate binding site. Residues Asp323 and His356 contribute to the active site. Asp357 contributes to the substrate binding site.

Belongs to the AB hydrolase superfamily. MetX family. In terms of assembly, homodimer.

It is found in the cytoplasm. The catalysed reaction is L-homoserine + succinyl-CoA = O-succinyl-L-homoserine + CoA. It participates in amino-acid biosynthesis; L-methionine biosynthesis via de novo pathway; O-succinyl-L-homoserine from L-homoserine: step 1/1. Transfers a succinyl group from succinyl-CoA to L-homoserine, forming succinyl-L-homoserine. This Pseudomonas putida (strain ATCC 700007 / DSM 6899 / JCM 31910 / BCRC 17059 / LMG 24140 / F1) protein is Homoserine O-succinyltransferase.